We begin with the raw amino-acid sequence, 552 residues long: Probable glucomannan 4-beta-mannosyltransferase 10 (552 aa).

The helical transmembrane segment at 62 to 82 threads the bilayer; sequence IVPLFKCLVAFCLIISLLVFI. The active site involves Asp161. Substrate-binding residues include Asp220 and Asp222. Asp314 is a catalytic residue. Transmembrane regions (helical) follow at residues 393–413, 430–450, 509–529, and 530–550; these read IIVHCFTFIFYCVILPTSVFF, ITLCIVIATPRSFYLVIFWIL, EIMVGIYILCCACYGLFFGNT, and LLYLYLFMQAVAFLISGVGFV.

Belongs to the glycosyltransferase 2 family. Plant cellulose synthase-like A subfamily.

It is found in the golgi apparatus membrane. The catalysed reaction is GDP-mannose + (glucomannan)n = GDP + (glucomannan)n+1.. In terms of biological role, probable mannan synthase which consists of a 4-beta-mannosyltransferase activity on mannan using GDP-mannose. The beta-1,4-mannan product is the backbone for galactomannan synthesis by galactomannan galactosyltransferase. Galactomannan is a noncellulosic polysaccharides of plant cell wall. In Arabidopsis thaliana (Mouse-ear cress), this protein is Probable glucomannan 4-beta-mannosyltransferase 10.